The following is a 496-amino-acid chain: Aspartic proteinase (496 aa).

The signal sequence occupies residues 1–24 (MAKRHLLLVTTCLWALSCALLLHA). A propeptide spans 25 to 59 (SSDGFLRVNLNKKRLDKEDLTAAKLAQQGNRLLKT) (activation peptide). Positions 77 to 493 (YYGVIGLGSP…DFGKDRIGFA (417 aa)) constitute a Peptidase A1 domain. Residue Asp-95 is part of the active site. 2 disulfide bridges follow: Cys-108/Cys-114 and Cys-273/Cys-277. Asp-282 is a catalytic residue. The Saposin B-type domain maps to 307 to 407 (IISTECKEVV…NQLCERLPSP (101 aa)). 4 disulfide bridges follow: Cys-312–Cys-401, Cys-337–Cys-373, Cys-343–Cys-370, and Cys-415–Cys-452. A glycan (N-linked (GlcNAc...) asparagine) is linked at Asn-387.

The protein belongs to the peptidase A1 family.

Its subcellular location is the vacuole. In terms of biological role, involved in the breakdown of propeptides of storage proteins in protein-storage vacuoles. This is Aspartic proteinase (RAP) from Oryza sativa subsp. japonica (Rice).